Consider the following 60-residue polypeptide: UPF0434 protein PM0859 (60 aa).

The protein belongs to the UPF0434 family.

The chain is UPF0434 protein PM0859 from Pasteurella multocida (strain Pm70).